A 345-amino-acid polypeptide reads, in one-letter code: NADH-ubiquinone oxidoreductase chain 2 (345 aa).

A run of 10 helical transmembrane segments spans residues 1-21 (MNPI…VITM), 25-45 (NLML…PMLI), 56-76 (ATKY…AIVL), 92-114 (GLIL…FHFW), 149-171 (LNST…GGLN), 178-198 (IMAY…PYNP), 200-220 (LTLL…MALM), 241-261 (LTMI…TGFL), 274-294 (NCLI…FFYT), and 324-344 (LMFS…PQLI).

The protein belongs to the complex I subunit 2 family. Core subunit of respiratory chain NADH dehydrogenase (Complex I) which is composed of 45 different subunits. Interacts with TMEM242.

The protein localises to the mitochondrion inner membrane. The catalysed reaction is a ubiquinone + NADH + 5 H(+)(in) = a ubiquinol + NAD(+) + 4 H(+)(out). Core subunit of the mitochondrial membrane respiratory chain NADH dehydrogenase (Complex I) which catalyzes electron transfer from NADH through the respiratory chain, using ubiquinone as an electron acceptor. Essential for the catalytic activity and assembly of complex I. In Mus musculus (Mouse), this protein is NADH-ubiquinone oxidoreductase chain 2.